A 199-amino-acid chain; its full sequence is Recombination protein RecR (199 aa).

A C4-type zinc finger spans residues 56 to 71; it reads CATCGNVAQEELCNIC. The 96-residue stretch at 79–174 folds into the Toprim domain; it reads SVICVVEEPK…KVTRLASGLP (96 aa).

Belongs to the RecR family.

Its function is as follows. May play a role in DNA repair. It seems to be involved in an RecBC-independent recombinational process of DNA repair. It may act with RecF and RecO. The polypeptide is Recombination protein RecR (Streptomyces avermitilis (strain ATCC 31267 / DSM 46492 / JCM 5070 / NBRC 14893 / NCIMB 12804 / NRRL 8165 / MA-4680)).